A 201-amino-acid polypeptide reads, in one-letter code: MICOS complex subunit MIC27 (201 aa).

A mitochondrion-targeting transit peptide spans 1–31 (MTQDKPIVETISNAGEQVTNVFGQFWQLVTS). Topologically, residues 32 to 117 (KNTTNNGDSK…KCNAYLTEEW (86 aa)) are cytoplasmic. The helical transmembrane segment at 118 to 138 (TALPKAAAITVGGMAGFVLGL) threads the bilayer. Residues 139–145 (KRGPVGR) are Mitochondrial intermembrane-facing. Residues 146 to 166 (LLTTTIGLATMAAFCYPIEAV) form a helical membrane-spanning segment. Topologically, residues 167–201 (DVAKTGRAHAEQTWYSFQESPTPSAIVKTNLSPPK) are cytoplasmic.

This sequence belongs to the apolipoprotein O/MICOS complex subunit Mic27 family. Component of the mitochondrial contact site and cristae organizing system (MICOS) complex.

It is found in the mitochondrion outer membrane. Functionally, sustains mitochondrial morphology probably through maintaining cristae morphology. May act as a component of the MICOS complex, a large protein complex of the mitochondria. This is MICOS complex subunit MIC27 from Caenorhabditis elegans.